We begin with the raw amino-acid sequence, 706 residues long: D-(-)-3-hydroxybutyrate oligomer hydrolase (706 aa).

The signal sequence occupies residues 1–32; the sequence is MTTTSKNCLTLTSIAAAVAAVLVLSACGGGSA. Serine 311 (charge relay system) is an active-site residue.

This sequence belongs to the D-(-)-3-hydroxybutyrate oligomer hydrolase family.

The protein resides in the secreted. The catalysed reaction is (3R)-hydroxybutanoate dimer + H2O = 2 (R)-3-hydroxybutanoate + H(+). Its pathway is lipid metabolism; butanoate metabolism. Participates in the degradation of poly-3-hydroxybutyrate (PHB). It works downstream of poly(3-hydroxybutyrate) depolymerase, hydrolyzing D(-)-3-hydroxybutyrate oligomers of various length (3HB-oligomers) into 3HB-monomers. In Polaromonas sp. (strain JS666 / ATCC BAA-500), this protein is D-(-)-3-hydroxybutyrate oligomer hydrolase.